Reading from the N-terminus, the 928-residue chain is G-protein coupled receptor family C group 6 member A (928 aa).

Positions 1 to 20 (MALSFVFITCFMILLDTSQS) are cleaved as a signal peptide. The Extracellular portion of the chain corresponds to 21–594 (CHTPDDFVAI…EYLDWDDSLA (574 aa)). Residues N332 and N555 are each glycosylated (N-linked (GlcNAc...) asparagine). Residues 595-615 (LLLIALSLLGIAFVLAVGIIF) traverse the membrane as a helical segment. Residues 616 to 630 (TRNLKTPVVKSSGGL) lie on the Cytoplasmic side of the membrane. The chain crosses the membrane as a helical span at residues 631-651 (VVCYVMLACHALNFASTGFFI). Residues 652-669 (GEPQDFTCKTRQTLFGVS) lie on the Extracellular side of the membrane. Residues 670–690 (FTLCVSCILTKSLKILLAFSF) traverse the membrane as a helical segment. The Cytoplasmic portion of the chain corresponds to 691-706 (DPTLKTFLKCLYRPVP). Residues 707-727 (IVLTCTGIQVVICTLWLVLAA) form a helical membrane-spanning segment. At 728-750 (PTVEENTSLPRVIILECEEGSAL) the chain is on the extracellular side. A helical transmembrane segment spans residues 751 to 771 (AFGTMLGYIAVLAFICFVFAF). At 772–784 (KGRKLPENYNEAK) the chain is on the cytoplasmic side. A helical transmembrane segment spans residues 785 to 805 (FLTFGMLIYFIAWITFIPVYA). The Extracellular segment spans residues 806–812 (TTFGKYL). Residues 813–833 (PAVEIIVILISNYGILCCTFF) traverse the membrane as a helical segment. Residues 834-928 (PKCYIILCKQ…TLHQKRSSSI (95 aa)) are Cytoplasmic-facing.

It belongs to the G-protein coupled receptor 3 family. As to quaternary structure, homodimer; disulfide-linked. N-glycosylated. In terms of tissue distribution, high expression in soft palate. Weak expression in kidney, liver, lung and brain. No expression detected in heart, testis, skeletal muscle amd spleen.

Its subcellular location is the cell membrane. In terms of biological role, receptor activated by multiple ligands, including osteocalcin (BGLAP), basic amino acids, and various cations. Activated by amino acids with a preference for basic amino acids such as L-Lys, L-Arg and L-ornithine but also by small and polar amino acids. The L-alpha amino acids respond is augmented by divalent cations Ca(2+) and Mg(2+). Seems to act through a G(q)/G(11) and G(i)-coupled pathway. Regulates testosterone production by acting as a ligand for uncarboxylated osteocalcin hormone: osteocalcin-binding at the surface of Leydig cells initiates a signaling response that promotes the expression of enzymes required for testosterone synthesis in a CREB-dependent manner. Mediates the non-genomic effects of androgens in multiple tissue. May coordinate nutritional and hormonal anabolic signals through the sensing of extracellular amino acids, osteocalcin, divalent ions and its responsiveness to anabolic steroids. The chain is G-protein coupled receptor family C group 6 member A (Gprc6a) from Rattus norvegicus (Rat).